Consider the following 49-residue polypeptide: Small, acid-soluble spore protein K (49 aa).

Positions 1–49 (MRNKSRGFPNMNNNKFEGEPRAKDDFASKRPDGSTNTHPQERMRASGKR) are disordered. Basic and acidic residues-rich tracts occupy residues 16-32 (FEGE…KRPD) and 39-49 (PQERMRASGKR).

Belongs to the SspK family.

The protein localises to the spore core. The polypeptide is Small, acid-soluble spore protein K (Bacillus licheniformis (strain ATCC 14580 / DSM 13 / JCM 2505 / CCUG 7422 / NBRC 12200 / NCIMB 9375 / NCTC 10341 / NRRL NRS-1264 / Gibson 46)).